Consider the following 170-residue polypeptide: Large ribosomal subunit protein uL10 (170 aa).

It belongs to the universal ribosomal protein uL10 family. As to quaternary structure, part of the ribosomal stalk of the 50S ribosomal subunit. The N-terminus interacts with L11 and the large rRNA to form the base of the stalk. The C-terminus forms an elongated spine to which L12 dimers bind in a sequential fashion forming a multimeric L10(L12)X complex.

Functionally, forms part of the ribosomal stalk, playing a central role in the interaction of the ribosome with GTP-bound translation factors. The polypeptide is Large ribosomal subunit protein uL10 (Lactobacillus helveticus (strain DPC 4571)).